The sequence spans 361 residues: Glutaminyl-peptide cyclotransferase (361 aa).

The N-terminal stretch at 1–28 (MAGCRDPRVVDTLHLLLLVAVLPLAVSG) is a signal peptide. N-linked (GlcNAc...) asparagine glycosylation occurs at Asn-49. Cysteines 139 and 164 form a disulfide. Asp-159 lines the Zn(2+) pocket. N-linked (GlcNAc...) asparagine glycosylation is present at Asn-183. Glu-201 (proton acceptor) is an active-site residue. Glu-202 is a binding site for Zn(2+). Residue Asp-248 is the Proton acceptor of the active site. Residue His-330 coordinates Zn(2+).

This sequence belongs to the glutaminyl-peptide cyclotransferase family. Expressed mainly in brain tissue.

The protein resides in the secreted. The catalysed reaction is N-terminal L-glutaminyl-[peptide] = N-terminal 5-oxo-L-prolyl-[peptide] + NH4(+). In terms of biological role, responsible for the biosynthesis of pyroglutamyl peptides. Has a bias against acidic and tryptophan residues adjacent to the N-terminal glutaminyl residue and a lack of importance of chain length after the second residue. Also catalyzes N-terminal pyroglutamate formation. The sequence is that of Glutaminyl-peptide cyclotransferase (QPCT) from Bos taurus (Bovine).